Consider the following 346-residue polypeptide: DNA primase small subunit PriS (346 aa).

Residues Asp97, Asp99, and Asp280 contribute to the active site.

Belongs to the eukaryotic-type primase small subunit family. Heterodimer of a small subunit (PriS) and a large subunit (PriL). Mg(2+) is required as a cofactor. Requires Mn(2+) as cofactor.

In terms of biological role, catalytic subunit of DNA primase, an RNA polymerase that catalyzes the synthesis of short RNA molecules used as primers for DNA polymerase during DNA replication. The small subunit contains the primase catalytic core and has DNA synthesis activity on its own. Binding to the large subunit stabilizes and modulates the activity, increasing the rate of DNA synthesis while decreasing the length of the DNA fragments, and conferring RNA synthesis capability. The DNA polymerase activity may enable DNA primase to also catalyze primer extension after primer synthesis. May also play a role in DNA repair. The protein is DNA primase small subunit PriS of Thermococcus kodakarensis (strain ATCC BAA-918 / JCM 12380 / KOD1) (Pyrococcus kodakaraensis (strain KOD1)).